The primary structure comprises 184 residues: Ribosome-recycling factor (184 aa).

It belongs to the RRF family.

The protein resides in the cytoplasm. In terms of biological role, responsible for the release of ribosomes from messenger RNA at the termination of protein biosynthesis. May increase the efficiency of translation by recycling ribosomes from one round of translation to another. The protein is Ribosome-recycling factor of Acinetobacter baylyi (strain ATCC 33305 / BD413 / ADP1).